The following is a 378-amino-acid chain: Pseudouridine kinase (378 aa).

Residues Asp12, Thr26, 37 to 41 (GVARN), Val38, Asn137, and Lys166 each bind pseudouridine. 2 residues coordinate Mg(2+): Ser181 and Thr237. The ATP site is built by Thr237, Gly239, Gly242, Thr298, Leu306, and Gly310. Asp311 contributes to the pseudouridine binding site.

This sequence belongs to the carbohydrate kinase PfkB family. As to quaternary structure, forms homodimers.

The protein resides in the peroxisome. It catalyses the reaction pseudouridine + ATP = psi-UMP + ADP + H(+). Functionally, catalyzes the phosphorylation of pseudouridine to pseudouridine 5'-phosphate (PsiMP). Catalyzes the first step in a pseudouridine degradation pathway. Acts together with the pseudouridine 5'-phosphate glycosidase PUMY in the peroxisome to prevent toxic pseudouridine monophosphate accumulation. The sequence is that of Pseudouridine kinase from Arabidopsis thaliana (Mouse-ear cress).